A 101-amino-acid chain; its full sequence is Thyrotropin subunit beta (101 aa).

4 cysteine pairs are disulfide-bonded: Cys2–Cys88, Cys10–Cys66, Cys14–Cys68, and Cys71–Cys78. A glycan (N-linked (GlcNAc...) asparagine) is linked at Asn6.

The protein belongs to the glycoprotein hormones subunit beta family. In terms of assembly, heterodimer of a common alpha chain and a unique beta chain which confers biological specificity to thyrotropin, lutropin, follitropin and gonadotropin.

It is found in the secreted. Indispensable for the control of thyroid structure and metabolism. This chain is Thyrotropin subunit beta (TSHB), found in Phodopus sungorus (Striped hairy-footed hamster).